Reading from the N-terminus, the 318-residue chain is Mevalonate 3-kinase (318 aa).

Leu-19 contacts substrate. ATP is bound by residues 96-100 (YSSQN) and 105-108 (SGSS). Substrate is bound by residues Glu-140 and Arg-144. Residues Arg-185 and Ser-188 each coordinate ATP.

This sequence belongs to the GHMP kinase family. In terms of assembly, homodimer.

The catalysed reaction is (R)-mevalonate + ATP = (R)-3-phosphomevalonate + ADP + H(+). The protein operates within isoprenoid biosynthesis; isopentenyl diphosphate biosynthesis via mevalonate pathway. Its function is as follows. Catalyzes the phosphorylation of mevalonate (MVA) to yield mevalonate-3-phosphate. Functions in an alternative mevalonate pathway, only present in extreme acidophiles of the Thermoplasmatales order, which passes through mevalonate 3-phosphate rather than mevalonate 5-phosphate. This is Mevalonate 3-kinase from Thermoplasma acidophilum (strain ATCC 25905 / DSM 1728 / JCM 9062 / NBRC 15155 / AMRC-C165).